We begin with the raw amino-acid sequence, 349 residues long: 5,10-methylenetetrahydromethanopterin reductase (349 aa).

It belongs to the mer family. Homotetramer composed of two loosely associated dimers.

It localises to the cytoplasm. The catalysed reaction is 5-methyl-5,6,7,8-tetrahydromethanopterin + oxidized coenzyme F420-(gamma-L-Glu)(n) + H(+) = 5,10-methylenetetrahydromethanopterin + reduced coenzyme F420-(gamma-L-Glu)(n). Its pathway is one-carbon metabolism; methanogenesis from CO(2); methyl-coenzyme M from 5,10-methylene-5,6,7,8-tetrahydromethanopterin: step 1/2. Its activity is regulated as follows. Requires the presence of relatively high concentrations of either sulfate or phosphate for maximal activity. Catalyzes the reversible reduction of methylene-H(4)MPT to methyl-H(4)MPT. The polypeptide is 5,10-methylenetetrahydromethanopterin reductase (Methanopyrus kandleri (strain AV19 / DSM 6324 / JCM 9639 / NBRC 100938)).